The chain runs to 110 residues: Large ribosomal subunit protein P2B (110 aa).

Position 29 is a phosphoserine (serine 29). Lysine 49 is covalently cross-linked (Glycyl lysine isopeptide (Lys-Gly) (interchain with G-Cter in ubiquitin)). The interval 66-110 (VPTGGASSAAAGAAGAAAGGDAAEEEKEEEAKEESDDDMGFGLFD) is disordered. The segment covering 69–86 (GGASSAAAGAAGAAAGGD) has biased composition (low complexity). Positions 87–104 (AAEEEKEEEAKEESDDDM) are enriched in acidic residues. Serine 100 carries the post-translational modification Phosphoserine.

This sequence belongs to the eukaryotic ribosomal protein P1/P2 family. Component of the large ribosomal subunit (LSU). Mature yeast ribosomes consist of a small (40S) and a large (60S) subunit. The 40S small subunit contains 1 molecule of ribosomal RNA (18S rRNA) and 33 different proteins (encoded by 57 genes). The large 60S subunit contains 3 rRNA molecules (25S, 5.8S and 5S rRNA) and 46 different proteins (encoded by 81 genes). The 5 acidic ribosomal P-proteins form the stalk structure of the 60S subunit. They are organized as a pentameric complex in which uL10/P0 interacts with 2 heterodimers, P1A-P2B and P1B-P2A. The N-terminus is not modified.

The protein localises to the cytoplasm. Component of the ribosome, a large ribonucleoprotein complex responsible for the synthesis of proteins in the cell. The small ribosomal subunit (SSU) binds messenger RNAs (mRNAs) and translates the encoded message by selecting cognate aminoacyl-transfer RNA (tRNA) molecules. The large subunit (LSU) contains the ribosomal catalytic site termed the peptidyl transferase center (PTC), which catalyzes the formation of peptide bonds, thereby polymerizing the amino acids delivered by tRNAs into a polypeptide chain. The nascent polypeptides leave the ribosome through a tunnel in the LSU and interact with protein factors that function in enzymatic processing, targeting, and the membrane insertion of nascent chains at the exit of the ribosomal tunnel. The protein is Large ribosomal subunit protein P2B of Saccharomyces cerevisiae (strain ATCC 204508 / S288c) (Baker's yeast).